Consider the following 502-residue polypeptide: Probable cytosol aminopeptidase (502 aa).

Lys-270 and Asp-275 together coordinate Mn(2+). Lys-282 is a catalytic residue. The Mn(2+) site is built by Asp-293, Asp-352, and Glu-354. Arg-356 is a catalytic residue.

The protein belongs to the peptidase M17 family. Mn(2+) serves as cofactor.

It localises to the cytoplasm. The catalysed reaction is Release of an N-terminal amino acid, Xaa-|-Yaa-, in which Xaa is preferably Leu, but may be other amino acids including Pro although not Arg or Lys, and Yaa may be Pro. Amino acid amides and methyl esters are also readily hydrolyzed, but rates on arylamides are exceedingly low.. It carries out the reaction Release of an N-terminal amino acid, preferentially leucine, but not glutamic or aspartic acids.. Functionally, presumably involved in the processing and regular turnover of intracellular proteins. Catalyzes the removal of unsubstituted N-terminal amino acids from various peptides. This is Probable cytosol aminopeptidase from Desulfotalea psychrophila (strain LSv54 / DSM 12343).